Here is a 195-residue protein sequence, read N- to C-terminus: Protein GrpE (195 aa).

Residues 1-20 (MSSKEQKTPDEQVLDQKEAA) show a composition bias toward basic and acidic residues. Residues 1–40 (MSSKEQKTPDEQVLDQKEAAKGQQADAAPETADVADPRDA) are disordered.

Belongs to the GrpE family. In terms of assembly, homodimer.

The protein resides in the cytoplasm. Its function is as follows. Participates actively in the response to hyperosmotic and heat shock by preventing the aggregation of stress-denatured proteins, in association with DnaK and GrpE. It is the nucleotide exchange factor for DnaK and may function as a thermosensor. Unfolded proteins bind initially to DnaJ; upon interaction with the DnaJ-bound protein, DnaK hydrolyzes its bound ATP, resulting in the formation of a stable complex. GrpE releases ADP from DnaK; ATP binding to DnaK triggers the release of the substrate protein, thus completing the reaction cycle. Several rounds of ATP-dependent interactions between DnaJ, DnaK and GrpE are required for fully efficient folding. This chain is Protein GrpE, found in Pectobacterium carotovorum subsp. carotovorum (strain PC1).